Consider the following 885-residue polypeptide: Ankyrin repeat and SAM domain-containing protein 6 (885 aa).

ANK repeat units follow at residues 8–37 (PGLQLLLRACEQGDTDTARRLLEPGGEPVA), 68–97 (AGNSALQLAAAGGHEPLVRFLLRRGASVNS), 101–130 (YGWSALMQAARCGHASVAHLLLDHGADVNA), 134–163 (LGASVLTVASRGGHLGVVKLLLEAGATVDH), 181–210 (LGITALMAAVQHGHEAVVRLLMEWGADPNH), 215–244 (VGWSPLMLAALLGKLSVVQQLVEKGANPDH), 282–312 (KRRPDIFHALKMGNFQLVKEIADEDPNHVNL), 316–345 (DGATPLMLAAVTGQLPLVQLLVEKHADMNK), 350–379 (HGWTALMQATYHGNKEIVKYLLNQGADVTL), and 383–414 (NGYTAFDLVMLLNDPDTELVRLLASVCMQVNK). Asn-129 carries the post-translational modification 3-hydroxyasparagine. Disordered regions lie at residues 415-439 (DRGGRPSHRPPLPHSKARQPWSIPM), 491-522 (MRAPPQDRTNHLGPPEAAHAAKDSGPGNPRRE), 563-775 (SSDR…ITDE), and 855-885 (FESSASNTRAPGNSPCMAGWVRPEETVSSRR). Over residues 608 to 640 (PSISRSPTSPASSGNFNHSPHSSGGASGVGSMS) the composition is skewed to low complexity. Ser-650 is modified (phosphoserine). Residues 650 to 662 (SGGSVDSVLSQIA) show a composition bias toward polar residues. Low complexity-rich tracts occupy residues 689-713 (GSSPPELPASLLGSGSGSSNVTSSS) and 722-739 (PPSGTSATSKSTSPTLTP). Phosphoserine occurs at positions 734 and 742. The segment covering 750-770 (SSVSSSSSHRQSKSSGGSSSG) has biased composition (low complexity). The SAM domain occupies 773-836 (TDEDELTGIL…LAAISELNAG (64 aa)). Residues 855–865 (FESSASNTRAP) show a composition bias toward polar residues. Over residues 876 to 885 (RPEETVSSRR) the composition is skewed to basic and acidic residues.

Homooligomer. Interacts with NEK8. Central component of a complex containing at least ANKS6, INVS, NEK8 and NPHP3. ANKS6 may organize complex assembly by linking INVS and NPHP3 to NEK8 and INVS may target the complex to the proximal ciliary axoneme. Interacts (via SAM domain) with BICC1 (via KH domains) in an RNA-dependent manner. Interacts (via SAM domain) with ANKS3 (via SAM domain). Hydroxylated at Asn-129, most probably by HIF1AN. This hydroxylation results in decreased NEK8-binding. As to expression, widely expressed with moderate level in brain, skeletal muscle and testis. Expressed in renal tubules.

The protein resides in the cell projection. The protein localises to the cilium. Its subcellular location is the cytoplasm. Required for renal function. The protein is Ankyrin repeat and SAM domain-containing protein 6 (Anks6) of Rattus norvegicus (Rat).